A 411-amino-acid chain; its full sequence is Squalene synthase (411 aa).

NADP(+) contacts are provided by Arg-49 and Arg-74. 3 residues coordinate Mg(2+): Asp-77, Glu-80, and Asp-81. Residues Arg-212, Lys-312, and Arg-314 each contribute to the NADP(+) site. Residues 388–408 (SPVLIVVIFIILAIILAQLFG) traverse the membrane as a helical segment.

This sequence belongs to the phytoene/squalene synthase family. Mg(2+) serves as cofactor.

The protein localises to the membrane. It catalyses the reaction 2 (2E,6E)-farnesyl diphosphate + NADH + H(+) = squalene + 2 diphosphate + NAD(+). The catalysed reaction is 2 (2E,6E)-farnesyl diphosphate + NADPH + H(+) = squalene + 2 diphosphate + NADP(+). Its function is as follows. Converts farnesyl diphosphate (FPP) into squalene, a precursor for sterol biosynthesis in eukaryotes. The sequence is that of Squalene synthase from Solanum lycopersicum (Tomato).